The chain runs to 58 residues: DNA-directed RNA polymerases I, II, and III subunit RPABC4 (58 aa).

Residues Cys-19, Cys-22, Cys-36, and Cys-39 each contribute to the Zn(2+) site. A C4-type zinc finger spans residues 19–39; the sequence is CGECHTENEIKSRDPIRCREC.

Belongs to the archaeal Rpo12/eukaryotic RPC10 RNA polymerase subunit family. As to quaternary structure, component of the RNA polymerase I (Pol I), RNA polymerase II (Pol II) and RNA polymerase III (Pol III) complexes consisting of at least 13, 12 and 17 subunits, respectively. Pol I complex consists of a ten-subunit catalytic core composed of POLR1A/RPA1, POLR1B/RPA2, POLR1C/RPAC1, POLR1D/RPAC2, POLR1H/RPA12, POLR2E/RPABC1, POLR2F/RPABC2, POLR2H/RPABC3, POLR2K/RPABC4 and POLR2L/RPABC5; a mobile stalk subunit POLR1F/RPA43 protruding from the core and additional subunits homologous to general transcription factors POLR1E/RPA49 and POLR1G/RPA34. Part of Pol I pre-initiation complex (PIC), in which Pol I core assembles with RRN3 and promoter-bound UTBF and SL1/TIF-IB complex. Pol II complex contains a ten-subunit catalytic core composed of POLR2A/RPB1, POLR2B/RPB2, POLR2C/RPB3, POLR2I/RPB9, POLR2J/RPB11, POLR2E/RPABC1, POLR2F/RPABC2, POLR2H/RPABC3, POLR2K/RPABC4 and POLR2L/RPABC5 and a mobile stalk composed of two subunits POLR2D/RPB4 and POLR2G/RPB7. Part of Pol II(G) complex, in which Pol II core associates with an additional subunit POLR2M; unlike conventional Pol II, Pol II(G) functions as a transcriptional repressor. Part of TBP-based Pol II pre-initiation complex (PIC), in which Pol II core assembles with general transcription factors and other specific initiation factors including GTF2E1, GTF2E2, GTF2F1, GTF2F2, TCEA1, ERCC2, ERCC3, GTF2H2, GTF2H3, GTF2H4, GTF2H5, GTF2A1, GTF2A2, GTF2B and TBP; this large multi-subunit PIC complex mediates DNA unwinding and targets Pol II core to the transcription start site where the first phosphodiester bond forms. Pol III complex consists of a ten-subunit catalytic core composed of POLR3A/RPC1, POLR3B/RPC2, POLR1C/RPAC1, POLR1D/RPAC2, POLR3K/RPC10, POLR2E/RPABC1, POLR2F/RPABC2, POLR2H/RPABC3, POLR2K/RPABC4 and POLR2L/RPABC5; a mobile stalk composed of two subunits POLR3H/RPC8 and CRCP/RPC9, protruding from the core and functioning primarily in transcription initiation; and additional subunits homologous to general transcription factors of the RNA polymerase II machinery, POLR3C/RPC3-POLR3F/RPC6-POLR3G/RPC7 heterotrimer required for transcription initiation and POLR3D/RPC4-POLR3E/RPC5 heterodimer involved in both transcription initiation and termination.

The protein localises to the nucleus. It is found in the nucleolus. Its function is as follows. DNA-dependent RNA polymerase catalyzes the transcription of DNA into RNA using the four ribonucleoside triphosphates as substrates. Common component of RNA polymerases I, II and III which synthesize ribosomal RNA precursors, mRNA precursors and many functional non-coding RNAs, and a small RNAs, such as 5S rRNA and tRNAs, respectively. This Bos taurus (Bovine) protein is DNA-directed RNA polymerases I, II, and III subunit RPABC4 (POLR2K).